The chain runs to 189 residues: HTH-type transcriptional regulator Hpr (189 aa).

The region spanning 12-156 is the HTH marR-type domain; that stretch reads ALLYSHKIVQ…ISAIVRRLYG (145 aa). The H-T-H motif DNA-binding region spans 62–85; it reads ISEIAKYGVMHVSTAFNFSKKLED.

Homodimer.

Its function is as follows. Negative regulator of protease production and sporulation. This Exiguobacterium sibiricum (strain DSM 17290 / CCUG 55495 / CIP 109462 / JCM 13490 / 255-15) protein is HTH-type transcriptional regulator Hpr.